The following is a 160-amino-acid chain: MNPRRKKRLGIILAIFFGISATVGLMVYALNQNMDLFYTPTELVNGKDGKKPEVGQRLRIGGMVVVGSVSRDNESLRVSFDLADVGPKVTILYDGILPDLFREGQGIVAQGVLKDATTIEAFEVLAKHDEEYMPSEVAEAMKKTHEPLQYTTEQKEGNAQ.

The Cytoplasmic portion of the chain corresponds to 1–8 (MNPRRKKR). The helical; Signal-anchor for type II membrane protein transmembrane segment at 9 to 29 (LGIILAIFFGISATVGLMVYA) threads the bilayer. The Periplasmic portion of the chain corresponds to 30 to 160 (LNQNMDLFYT…TTEQKEGNAQ (131 aa)). Heme is bound by residues His-128 and Tyr-132.

Belongs to the CcmE/CycJ family.

Its subcellular location is the cell inner membrane. Heme chaperone required for the biogenesis of c-type cytochromes. Transiently binds heme delivered by CcmC and transfers the heme to apo-cytochromes in a process facilitated by CcmF and CcmH. This Vibrio atlanticus (strain LGP32) (Vibrio splendidus (strain Mel32)) protein is Cytochrome c-type biogenesis protein CcmE.